Here is a 283-residue protein sequence, read N- to C-terminus: Pantothenate synthetase (283 aa).

Residue 30-37 (MGNLHDGH) coordinates ATP. Residue histidine 37 is the Proton donor of the active site. Residue glutamine 61 participates in (R)-pantoate binding. Residue glutamine 61 coordinates beta-alanine. An ATP-binding site is contributed by 149–152 (GEKD). Glutamine 155 contributes to the (R)-pantoate binding site. 186–189 (LSSR) is an ATP binding site.

This sequence belongs to the pantothenate synthetase family. In terms of assembly, homodimer.

Its subcellular location is the cytoplasm. It carries out the reaction (R)-pantoate + beta-alanine + ATP = (R)-pantothenate + AMP + diphosphate + H(+). Its pathway is cofactor biosynthesis; (R)-pantothenate biosynthesis; (R)-pantothenate from (R)-pantoate and beta-alanine: step 1/1. Catalyzes the condensation of pantoate with beta-alanine in an ATP-dependent reaction via a pantoyl-adenylate intermediate. The polypeptide is Pantothenate synthetase (Escherichia coli O157:H7).